Here is a 273-residue protein sequence, read N- to C-terminus: Protein FAM210A (273 aa).

Residues 94–116 are disordered; sequence RVLSSSSTSQETPSEKKEETDPL. Over residues 106 to 116 the composition is skewed to basic and acidic residues; it reads PSEKKEETDPL. The DUF1279 domain maps to 118 to 230; that stretch reads DKSISLYQRF…GYMSTPPPVK (113 aa). A helical transmembrane segment spans residues 138 to 158; that stretch reads LIPVHLITSGIWFGTFYYATI. The stretch at 233–269 forms a coiled coil; the sequence is LQGRMEETKELITEKMEETKDRLTEKLQETKGKVSFK.

It belongs to the FAM210 family. In terms of assembly, interacts with ATAD3A. In terms of tissue distribution, expressed in skeletal muscle, heart, brain but not in bone.

It is found in the membrane. The protein resides in the mitochondrion. Its subcellular location is the cytoplasm. May play a role in the structure and strength of both muscle and bone. The chain is Protein FAM210A (Fam210a) from Mus musculus (Mouse).